Reading from the N-terminus, the 214-residue chain is FMN-dependent NADH:quinone oxidoreductase 1 (214 aa).

FMN contacts are provided by residues 17-19 (SWS) and 144-147 (SAGG).

Belongs to the azoreductase type 1 family. In terms of assembly, homodimer. It depends on FMN as a cofactor.

The enzyme catalyses 2 a quinone + NADH + H(+) = 2 a 1,4-benzosemiquinone + NAD(+). It carries out the reaction N,N-dimethyl-1,4-phenylenediamine + anthranilate + 2 NAD(+) = 2-(4-dimethylaminophenyl)diazenylbenzoate + 2 NADH + 2 H(+). Its function is as follows. Quinone reductase that provides resistance to thiol-specific stress caused by electrophilic quinones. Functionally, also exhibits azoreductase activity. Catalyzes the reductive cleavage of the azo bond in aromatic azo compounds to the corresponding amines. The sequence is that of FMN-dependent NADH:quinone oxidoreductase 1 from Lactococcus lactis subsp. lactis (strain IL1403) (Streptococcus lactis).